A 167-amino-acid polypeptide reads, in one-letter code: Ammonium/H(+) antiporter subunit AmhM (167 aa).

The 85-residue stretch at Ile79 to Cys163 folds into the RCK C-terminal domain.

As to quaternary structure, interacts with AmhT.

Its subcellular location is the cell membrane. Modulates the activity of the ammonium/proton antiporter AmhT. In Alkalihalophilus pseudofirmus (strain ATCC BAA-2126 / JCM 17055 / OF4) (Bacillus pseudofirmus), this protein is Ammonium/H(+) antiporter subunit AmhM (amhM).